The following is a 325-amino-acid chain: Basic membrane protein A (325 aa).

The signal sequence occupies residues 1-3 (FLS). Cysteine 4 carries N-palmitoyl cysteine lipidation. Residue cysteine 4 is the site of S-diacylglycerol cysteine attachment.

It belongs to the BMP lipoprotein family. Monomer.

It localises to the cell inner membrane. Immunogenic protein. May be part of an ABC-type nucleoside uptake system involved in the purine salvage pathway. In Borreliella afzelii (Borrelia afzelii), this protein is Basic membrane protein A (bmpA).